The sequence spans 212 residues: Adenylate kinase (212 aa).

10-15 (GAGKGT) is a binding site for ATP. An NMP region spans residues 30–59 (STGDMFRAAMANQTEMGRLAKSYIDKGELV). AMP-binding positions include Thr-31, Arg-36, 57 to 59 (ELV), 86 to 89 (GYPR), and Gln-93. The LID stretch occupies residues 127 to 159 (GRIINRKTGETFHKVFNPPVDYKEEDYYQREDD). Residues Arg-128 and 137-138 (TF) each bind ATP. Positions 156 and 167 each coordinate AMP. Gln-195 is a binding site for ATP.

The protein belongs to the adenylate kinase family. In terms of assembly, monomer.

The protein localises to the cytoplasm. It catalyses the reaction AMP + ATP = 2 ADP. Its pathway is purine metabolism; AMP biosynthesis via salvage pathway; AMP from ADP: step 1/1. Catalyzes the reversible transfer of the terminal phosphate group between ATP and AMP. Plays an important role in cellular energy homeostasis and in adenine nucleotide metabolism. In Streptococcus pyogenes serotype M12 (strain MGAS2096), this protein is Adenylate kinase.